Here is a 276-residue protein sequence, read N- to C-terminus: Large ribosomal subunit protein uL2 (276 aa).

A disordered region spans residues 212–276 (NRHRGIRPQT…KLIISRKKHK (65 aa)). Residues 257–276 (YKTRKKKASDKLIISRKKHK) are compositionally biased toward basic residues.

Belongs to the universal ribosomal protein uL2 family. As to quaternary structure, part of the 50S ribosomal subunit. Forms a bridge to the 30S subunit in the 70S ribosome.

Its function is as follows. One of the primary rRNA binding proteins. Required for association of the 30S and 50S subunits to form the 70S ribosome, for tRNA binding and peptide bond formation. It has been suggested to have peptidyltransferase activity; this is somewhat controversial. Makes several contacts with the 16S rRNA in the 70S ribosome. The sequence is that of Large ribosomal subunit protein uL2 from Helicobacter pylori (strain HPAG1).